Reading from the N-terminus, the 372-residue chain is Biotin synthase (372 aa).

The 236-residue stretch at 73 to 308 (CCGNTVDLCS…QQIIRYAGGR (236 aa)) folds into the Radical SAM core domain. 3 residues coordinate [4Fe-4S] cluster: cysteine 91, cysteine 95, and cysteine 98. Residues cysteine 136, cysteine 173, cysteine 233, and arginine 303 each contribute to the [2Fe-2S] cluster site.

Belongs to the radical SAM superfamily. Biotin synthase family. As to quaternary structure, homodimer. Requires [4Fe-4S] cluster as cofactor. [2Fe-2S] cluster is required as a cofactor.

It catalyses the reaction (4R,5S)-dethiobiotin + (sulfur carrier)-SH + 2 reduced [2Fe-2S]-[ferredoxin] + 2 S-adenosyl-L-methionine = (sulfur carrier)-H + biotin + 2 5'-deoxyadenosine + 2 L-methionine + 2 oxidized [2Fe-2S]-[ferredoxin]. Its pathway is cofactor biosynthesis; biotin biosynthesis; biotin from 7,8-diaminononanoate: step 2/2. Functionally, catalyzes the conversion of dethiobiotin (DTB) to biotin by the insertion of a sulfur atom into dethiobiotin via a radical-based mechanism. This is Biotin synthase from Cyanothece sp. (strain PCC 7425 / ATCC 29141).